A 1085-amino-acid polypeptide reads, in one-letter code: Error-prone DNA polymerase (1085 aa).

It belongs to the DNA polymerase type-C family. DnaE2 subfamily.

It is found in the cytoplasm. The catalysed reaction is DNA(n) + a 2'-deoxyribonucleoside 5'-triphosphate = DNA(n+1) + diphosphate. DNA polymerase involved in damage-induced mutagenesis and translesion synthesis (TLS). It is not the major replicative DNA polymerase. This is Error-prone DNA polymerase from Symbiobacterium thermophilum (strain DSM 24528 / JCM 14929 / IAM 14863 / T).